A 70-amino-acid chain; its full sequence is Small ribosomal subunit protein bS21 (70 aa).

This sequence belongs to the bacterial ribosomal protein bS21 family.

The sequence is that of Small ribosomal subunit protein bS21 from Helicobacter acinonychis (strain Sheeba).